Reading from the N-terminus, the 817-residue chain is Trehalose-phosphatase (817 aa).

The segment at 1-547 is glycosyltransferase; it reads MSVYGKIPST…LAATKTDQRI (547 aa).

In the N-terminal section; belongs to the glycosyltransferase 20 family. It in the C-terminal section; belongs to the trehalose phosphatase family. In terms of assembly, component of the trehalose synthase complex that contains at least tps1, ntp1, and tpp1. Interacts with tps1. Interacts with ntp1. Requires Mg(2+) as cofactor.

It carries out the reaction alpha,alpha-trehalose 6-phosphate + H2O = alpha,alpha-trehalose + phosphate. The protein operates within carbohydrate biosynthesis. In terms of biological role, phosphatase catalytic subunit of the trehalose synthase complex that catalyzes the production of trehalose from glucose-6-phosphate and UDP-alpha-D-glucose in a two step process. The disaccharide trehalose serves as a storage carbohydrate that is mobilized during nutrient stress and spore germination. Together with ntp1, regulates the level of trehalose as a protectant for cell integrity during thermal, osmotic, and oxidative stress. This chain is Trehalose-phosphatase, found in Schizosaccharomyces pombe (strain 972 / ATCC 24843) (Fission yeast).